The primary structure comprises 603 residues: Coiled-coil domain-containing protein 148 (603 aa).

2 coiled-coil regions span residues 365 to 429 (LAKD…KKKK) and 461 to 510 (EQSL…KQVA).

The sequence is that of Coiled-coil domain-containing protein 148 (CCDC148) from Macaca fascicularis (Crab-eating macaque).